Here is a 291-residue protein sequence, read N- to C-terminus: 4-hydroxy-tetrahydrodipicolinate synthase (291 aa).

T44 is a pyruvate binding site. Y132 acts as the Proton donor/acceptor in catalysis. K160 acts as the Schiff-base intermediate with substrate in catalysis. I202 is a pyruvate binding site.

The protein belongs to the DapA family. In terms of assembly, homotetramer; dimer of dimers.

The protein resides in the cytoplasm. It catalyses the reaction L-aspartate 4-semialdehyde + pyruvate = (2S,4S)-4-hydroxy-2,3,4,5-tetrahydrodipicolinate + H2O + H(+). Its pathway is amino-acid biosynthesis; L-lysine biosynthesis via DAP pathway; (S)-tetrahydrodipicolinate from L-aspartate: step 3/4. In terms of biological role, catalyzes the condensation of (S)-aspartate-beta-semialdehyde [(S)-ASA] and pyruvate to 4-hydroxy-tetrahydrodipicolinate (HTPA). This Zymomonas mobilis subsp. mobilis (strain ATCC 31821 / ZM4 / CP4) protein is 4-hydroxy-tetrahydrodipicolinate synthase.